The primary structure comprises 148 residues: Large ribosomal subunit protein bL9 (148 aa).

Belongs to the bacterial ribosomal protein bL9 family.

In terms of biological role, binds to the 23S rRNA. In Desulfatibacillum aliphaticivorans, this protein is Large ribosomal subunit protein bL9.